The primary structure comprises 334 residues: MHNTDVIIIGAGPVGLFTIFQAGMLGMKCHVIDAQETVGGQCITLYPEKPIYDIPAYPKIAAEELIKQLEFQAAPFKPVYHLNQHATDLNKQGDFFEIRTSKNTIIKSKAIIIAAGAGSFGPNKPPLANIEDFEGKSVFYFINNKSKFAGKNIVIAGGGDSAVDWAISLSEIANKIYLVHRRDKFTAAPESVRQLRDIAETGKIELVTGYQLNALDGNNGTLQTVIVKDLQNNIRKLDANVLLPFFGLKQDLGSLANWGLDVKLHHIEVDNSYYQTNIEGIYAIGDIAHYAGKLKLILTGFAEAASSIHHAYIRVFNGQALHFEYSTTKYGERK.

Asp-33, Gln-41, Tyr-46, Ala-86, Phe-120, Asp-286, and Thr-327 together coordinate FAD.

Belongs to the ferredoxin--NADP reductase type 2 family. Homodimer. The cofactor is FAD.

The catalysed reaction is 2 reduced [2Fe-2S]-[ferredoxin] + NADP(+) + H(+) = 2 oxidized [2Fe-2S]-[ferredoxin] + NADPH. The protein is Ferredoxin--NADP reductase of Rickettsia akari (strain Hartford).